The primary structure comprises 258 residues: Isoprenyl transferase (258 aa).

Asp38 is an active-site residue. A Mg(2+)-binding site is contributed by Asp38. Substrate-binding positions include Gly39–Arg42, Trp43, Arg51, His55, and Ser83–Glu85. Asn86 serves as the catalytic Proton acceptor. Residues Trp87, Arg89, Arg206, and Arg212–Ser214 contribute to the substrate site. Glu225 lines the Mg(2+) pocket.

Belongs to the UPP synthase family. Homodimer. Requires Mg(2+) as cofactor.

In terms of biological role, catalyzes the condensation of isopentenyl diphosphate (IPP) with allylic pyrophosphates generating different type of terpenoids. This is Isoprenyl transferase from Bacillus cereus (strain ATCC 10987 / NRS 248).